The following is a 66-amino-acid chain: FMRFamide-like neuropeptide 21 (66 aa).

A signal peptide spans 1–16 (MRLFILLSCLLAWVLA).

Belongs to the FARP (FMRFamide related peptide) family. In terms of processing, may be processed by convertase egl-3. Expressed in the ADL, ASE and ASH sensory neurons, the URA motor neurons and the MC, M2 and M4 pharyngeal neurons.

The protein localises to the secreted. Functionally, FMRFamide-like neuropeptide. Involved in modulating locomotion quiescence during the sleep-like state called lethargus which occurs during molting between larval and adult stages, acting via the G-protein coupled receptor npr-1. Plays a role in modulating social and feeding behavior. Its function is as follows. Ligand to G-protein coupled receptor npr-1. The polypeptide is FMRFamide-like neuropeptide 21 (Caenorhabditis elegans).